The sequence spans 317 residues: Methionyl-tRNA formyltransferase (317 aa).

112–115 (SLLP) is a (6S)-5,6,7,8-tetrahydrofolate binding site.

It belongs to the Fmt family.

The catalysed reaction is L-methionyl-tRNA(fMet) + (6R)-10-formyltetrahydrofolate = N-formyl-L-methionyl-tRNA(fMet) + (6S)-5,6,7,8-tetrahydrofolate + H(+). Attaches a formyl group to the free amino group of methionyl-tRNA(fMet). The formyl group appears to play a dual role in the initiator identity of N-formylmethionyl-tRNA by promoting its recognition by IF2 and preventing the misappropriation of this tRNA by the elongation apparatus. The polypeptide is Methionyl-tRNA formyltransferase (Mycoplasma mycoides subsp. mycoides SC (strain CCUG 32753 / NCTC 10114 / PG1)).